A 295-amino-acid chain; its full sequence is Origin of replication complex subunit 6 (295 aa).

A disordered region spans residues 212-295 (PSKRKHDDDS…MALEVSSAAN (84 aa)). Residues 220–236 (DSDSSGESSGDDQDELD) show a composition bias toward acidic residues. Positions 254–263 (WKSSVLSNKQ) are enriched in polar residues.

It belongs to the ORC6 family. In terms of assembly, component of the origin recognition complex (ORC) composed of at least ORC1, ORC2, ORC3, ORC4, ORC5 and ORC6. ORC is regulated in a cell-cycle and development dependent manner. It is sequentially assembled at the exit from anaphase of mitosis and disassembled as cells enter S phase.

The protein resides in the nucleus. Its function is as follows. Component of the origin recognition complex (ORC) that binds origins of replication. DNA-binding is ATP-dependent. The specific DNA sequences that define origins of replication have not been identified yet. ORC is required to assemble the pre-replication complex necessary to initiate DNA replication. The protein is Origin of replication complex subunit 6 of Oryza sativa subsp. japonica (Rice).